Here is a 132-residue protein sequence, read N- to C-terminus: ATP synthase epsilon chain, cyanelle (132 aa).

Belongs to the ATPase epsilon chain family. In terms of assembly, F-type ATPases have 2 components, CF(1) - the catalytic core - and CF(0) - the membrane proton channel. CF(1) has five subunits: alpha(3), beta(3), gamma(1), delta(1), epsilon(1). CF(0) has three main subunits: a, b and c.

It localises to the plastid. The protein resides in the cyanelle thylakoid membrane. Produces ATP from ADP in the presence of a proton gradient across the membrane. This is ATP synthase epsilon chain, cyanelle from Cyanophora paradoxa.